The primary structure comprises 350 residues: Biotin synthase (350 aa).

The region spanning 41–268 (NEVQISRLLS…KSRVRLSAGR (228 aa)) is the Radical SAM core domain. Positions 56, 60, and 63 each coordinate [4Fe-4S] cluster. [2Fe-2S] cluster is bound by residues C100, C131, C191, and R263.

It belongs to the radical SAM superfamily. Biotin synthase family. In terms of assembly, homodimer. [4Fe-4S] cluster serves as cofactor. [2Fe-2S] cluster is required as a cofactor.

It catalyses the reaction (4R,5S)-dethiobiotin + (sulfur carrier)-SH + 2 reduced [2Fe-2S]-[ferredoxin] + 2 S-adenosyl-L-methionine = (sulfur carrier)-H + biotin + 2 5'-deoxyadenosine + 2 L-methionine + 2 oxidized [2Fe-2S]-[ferredoxin]. The protein operates within cofactor biosynthesis; biotin biosynthesis; biotin from 7,8-diaminononanoate: step 2/2. In terms of biological role, catalyzes the conversion of dethiobiotin (DTB) to biotin by the insertion of a sulfur atom into dethiobiotin via a radical-based mechanism. The polypeptide is Biotin synthase (Shewanella frigidimarina (strain NCIMB 400)).